A 524-amino-acid polypeptide reads, in one-letter code: Xanthotoxin 5-hydroxylase CYP82C4 (524 aa).

The helical transmembrane segment at 1–21 (MDTSLFSLFVPILVFVFIALF) threads the bilayer. Residue C463 coordinates heme.

It belongs to the cytochrome P450 family. Heme serves as cofactor. As to expression, expressed in both primary and lateral roots under iron-deficient conditions, except in apical root zones, and mostly in the root epidermal layer.

It localises to the membrane. The enzyme catalyses fraxetin + reduced [NADPH--hemoprotein reductase] + O2 = sideretin (reduced form) + oxidized [NADPH--hemoprotein reductase] + H2O + H(+). It carries out the reaction xanthotoxin + reduced [NADPH--hemoprotein reductase] + O2 = 5-hydroxyxanthotoxin + oxidized [NADPH--hemoprotein reductase] + H2O + 2 H(+). Its pathway is phenylpropanoid metabolism. In terms of biological role, can hydroxylate xanthotoxin (8-methoxypsoralen) to form 5-hydroxyxanthotoxin (5-hydroxy-8-methoxypsoralen) in vivo and in vitro. Involved in the early iron deficiency response, possibly through an IDE1-like mediated pathway. Involved in the pathway of sideretin biosynthesis from feruloyl CoA, a redox-active catecholic metabolite exuded by roots in response to iron deficiency in order to facilitate the uptake of iron; this pathway consists in the successive conversion from feruloyl CoA to scopoletin, from scopoletin to fraxetin and from fraxetin to sideretin. Catalyzes the biosynthesis of sideretin via fraxetin hydroxylation. In Arabidopsis thaliana (Mouse-ear cress), this protein is Xanthotoxin 5-hydroxylase CYP82C4.